Here is a 190-residue protein sequence, read N- to C-terminus: uncharacterized protein (190 aa).

This is an uncharacterized protein from Archaeoglobus fulgidus (strain ATCC 49558 / DSM 4304 / JCM 9628 / NBRC 100126 / VC-16).